The sequence spans 357 residues: 3-dehydroquinate synthase (357 aa).

NAD(+) is bound by residues 104 to 108 (GVVGD), 128 to 129 (TT), Lys-141, and 168 to 171 (FLET). Positions 183, 243, and 260 each coordinate Zn(2+).

It belongs to the sugar phosphate cyclases superfamily. Dehydroquinate synthase family. The cofactor is NAD(+). Requires Co(2+) as cofactor. Zn(2+) serves as cofactor.

The protein localises to the cytoplasm. The catalysed reaction is 7-phospho-2-dehydro-3-deoxy-D-arabino-heptonate = 3-dehydroquinate + phosphate. It participates in metabolic intermediate biosynthesis; chorismate biosynthesis; chorismate from D-erythrose 4-phosphate and phosphoenolpyruvate: step 2/7. Its function is as follows. Catalyzes the conversion of 3-deoxy-D-arabino-heptulosonate 7-phosphate (DAHP) to dehydroquinate (DHQ). The chain is 3-dehydroquinate synthase from Streptococcus pyogenes serotype M6 (strain ATCC BAA-946 / MGAS10394).